Reading from the N-terminus, the 80-residue chain is Small ribosomal subunit protein bS18 (80 aa).

It belongs to the bacterial ribosomal protein bS18 family. As to quaternary structure, part of the 30S ribosomal subunit. Forms a tight heterodimer with protein bS6.

Binds as a heterodimer with protein bS6 to the central domain of the 16S rRNA, where it helps stabilize the platform of the 30S subunit. The sequence is that of Small ribosomal subunit protein bS18 from Staphylococcus haemolyticus (strain JCSC1435).